Consider the following 415-residue polypeptide: SNF1 protein kinase subunit beta-2 (415 aa).

Disordered stretches follow at residues 1–43, 55–158, and 249–276; these read MGTT…EMDA, KCSD…PSEI, and EKNP…SSIA. The N-myristoyl glycine moiety is linked to residue G2. Over residues 9–19 the composition is skewed to basic residues; that stretch reads AQKKQTTKKCR. Positions 55–69 are enriched in polar residues; sequence KCSDSQDAGQPSREG. S66 is subject to Phosphoserine. Basic and acidic residues-rich tracts occupy residues 122–150 and 249–264; these read PKQD…RAKE and EKNP…EADS. Positions 154–335 are kinase-interacting sequence (KIS); required for interaction with SNF1; sequence GPSEIKSSLM…LDRQQSNTDT (182 aa). Position 298 is a phosphoserine (S298). The interval 336 to 415 is association with SNF1 kinase complex (ASC) domain; required for interaction with SNF4; the sequence is SWLTPPQLPP…QILYTPIESS (80 aa).

This sequence belongs to the 5'-AMP-activated protein kinase beta subunit family. In terms of assembly, component of the SNF1 kinase complex, a heterotrimeric complex composed of the catalytic alpha subunit SNF1, one of the three related beta subunits SIP1, SIP2 or GAL83, and the regulatory gamma subunit SNF4. The beta subunit serves as a bridge between the catalytic and the regulatory subunit. Interacts (via KIS domain) with SNF1. Interacts (via ASC domain) with SNF4. In terms of processing, phosphorylated by SNF1 in vitro.

It is found in the cytoplasm. The protein resides in the cell membrane. Functionally, beta subunit of the SNF1 kinase complex, which is required for transcriptional, metabolic, and developmental adaptations in response to glucose limitation. Has a structural role, mediating heterotrimer formation, and a regulatory role, defining carbon source-regulated subcellular location and substrate specificity of the SNF1 kinase complex. Involved in the regulation of aging. Acts as a negative regulator of nuclear SNF1 activity in young cells by sequestering its activating gamma subunit at the plasma membrane. The protein is SNF1 protein kinase subunit beta-2 (SIP2) of Saccharomyces cerevisiae (strain ATCC 204508 / S288c) (Baker's yeast).